Here is a 1701-residue protein sequence, read N- to C-terminus: Rho guanine nucleotide exchange factor TIAM2 (1701 aa).

4 disordered regions span residues 1–21 (MGNS…NTIT), 201–250 (SPTL…SSWY), 265–293 (GSFL…FNQS), and 389–417 (SLSR…DGLN). Gly2 carries the N-myristoyl glycine lipid modification. A compositionally biased stretch (low complexity) spans 238–248 (SKGSSLSSESS). A compositionally biased stretch (basic and acidic residues) spans 397–413 (LQEPRSKEGSDYFDSRS). The PH 1 domain occupies 506–620 (VVRKAGWLFF…WVTAVHSACA (115 aa)). Residues 628-695 (GKEDTLRLLK…KFHMDLFRMR (68 aa)) adopt a coiled-coil conformation. One can recognise an RBD domain in the interval 810-881 (IQTYVHFQDN…YMQQQVYDEI (72 aa)). Positions 890–976 (DVQLTKTGSV…GLTLIARPPD (87 aa)) constitute a PDZ domain. Residues 1070–1092 (DSQANGMEGPRENQDPPPRSLAR) are disordered. Positions 1099–1293 (RLRKVIQELV…EKVASHINEM (195 aa)) constitute a DH domain. Positions 1347–1478 (DLELTVFVFK…EKTCKDRLVP (132 aa)) constitute a PH 2 domain. Disordered regions lie at residues 1500–1556 (NSSS…GLAD) and 1568–1628 (LSDE…PKLV). A compositionally biased stretch (low complexity) spans 1513 to 1527 (GTLLDSDEGSLSSGT). The residue at position 1583 (Ser1583) is a Phosphoserine. Basic and acidic residues predominate over residues 1596–1607 (RISEDPDVHPEA). Thr1648 is modified (phosphothreonine).

The protein belongs to the TIAM family. Interacts with MAP1A, MAP1B, PARP1 and YWHAE. Interacts with CD44, PARD3 and MAPK8IP2. Post-translationally, phosphorylated on serine and threonine residues. Phosphorylated on Thr-1648 by Rho-kinase. Its phosphorylation by Rho-kinase inhibits its guanine nucleotide exchange activity, its interaction with MAP1A, MAP1B, PARP1 and YWHAE and reduces its ability to promote neurite growth. Expressed in the occipital, frontal and temporal lobes, cerebellum, putamen and testis.

The protein resides in the cytoplasm. The protein localises to the cell projection. It is found in the lamellipodium. Its subcellular location is the filopodium. It localises to the growth cone. The protein resides in the neuron projection. The protein localises to the perikaryon. Its function is as follows. Modulates the activity of RHO-like proteins and connects extracellular signals to cytoskeletal activities. Acts as a GDP-dissociation stimulator protein that stimulates the GDP-GTP exchange activity of RHO-like GTPases and activates them. Mediates extracellular laminin signals to activate Rac1, contributing to neurite growth. Involved in lamellipodial formation and advancement of the growth cone of embryonic hippocampal neurons. Promotes migration of neurons in the cerebral cortex. When overexpressed, induces membrane ruffling accompanied by the accumulation of actin filaments along the altered plasma membrane. Activates specifically RAC1, but not CDC42 and RHOA. The chain is Rho guanine nucleotide exchange factor TIAM2 (TIAM2) from Homo sapiens (Human).